The sequence spans 481 residues: Probable autolysin LytO (481 aa).

The Peptidase C51 domain occupies 7-148 (KNEFIEWLKT…AYDFPMWFIR (142 aa)). Residues 155-165 (TAPRSVQSPTQ) are compositionally biased toward polar residues. Residues 155-177 (TAPRSVQSPTQAPKKETAKPQPK) form a disordered region. Residues 198–323 (SNPKGIVIHN…NEFTSTSCPH (126 aa)) enclose the N-acetylmuramoyl-L-alanine amidase domain. Positions 398–466 (EESARFTNGN…YLPIRTWNGS (69 aa)) constitute an SH3b domain.

Belongs to the N-acetylmuramoyl-L-alanine amidase 2 family.

It carries out the reaction Hydrolyzes the link between N-acetylmuramoyl residues and L-amino acid residues in certain cell-wall glycopeptides.. Functionally, has weak lytic activity toward S.aureus cells. The protein is Probable autolysin LytO of Staphylococcus aureus (strain NCTC 8325 / PS 47).